Reading from the N-terminus, the 423-residue chain is Glucose-1-phosphate adenylyltransferase (423 aa).

Residues Y108, G173, E188–K189, and S207 contribute to the alpha-D-glucose 1-phosphate site.

It belongs to the bacterial/plant glucose-1-phosphate adenylyltransferase family. As to quaternary structure, homotetramer.

It carries out the reaction alpha-D-glucose 1-phosphate + ATP + H(+) = ADP-alpha-D-glucose + diphosphate. It functions in the pathway glycan biosynthesis; glycogen biosynthesis. Involved in the biosynthesis of ADP-glucose, a building block required for the elongation reactions to produce glycogen. Catalyzes the reaction between ATP and alpha-D-glucose 1-phosphate (G1P) to produce pyrophosphate and ADP-Glc. In Francisella tularensis subsp. mediasiatica (strain FSC147), this protein is Glucose-1-phosphate adenylyltransferase.